Reading from the N-terminus, the 718-residue chain is Kinesin-2a (718 aa).

In terms of domain architecture, Kinesin motor spans 5-335 (NIKVIVRCRP…LRYADRAKQI (331 aa)). 97-104 (GQTGAGKT) serves as a coordination point for ATP. Residues Gly100, Gly102, Lys103, Thr104, and Trp105 each contribute to the ADP site. A Mg(2+)-binding site is contributed by Thr104. The stretch at 432-477 (SRKAADELEAKRRALAEAKQKRESELEQKEALNKEAIVTLTDLKSQ) forms a coiled coil.

It belongs to the TRAFAC class myosin-kinesin ATPase superfamily. Kinesin family. Kinesin II subfamily. Monomer.

It localises to the cell projection. It is found in the cilium. The protein localises to the flagellum. Its subcellular location is the cytoplasm. The protein resides in the cytoskeleton. It localises to the flagellum axoneme. It is found in the flagellum basal body. Functionally, involved in anterograde intraflagellar transport (IFT). Involved in flagellar assembly. The sequence is that of Kinesin-2a from Giardia intestinalis (strain ATCC 50803 / WB clone C6) (Giardia lamblia).